A 579-amino-acid chain; its full sequence is Copine-E (579 aa).

C2 domains are found at residues 45–175 and 183–304; these read IDPS…KVIG and QTGT…EFTL. Ca(2+)-binding residues include Asp-80, Asp-86, Asp-145, Asp-147, and Asp-153. Positions 345 to 552 constitute a VWFA domain; it reads NLMIAIDCTA…KKYENDPEQL (208 aa).

This sequence belongs to the copine family. Ca(2+) is required as a cofactor.

This Dictyostelium discoideum (Social amoeba) protein is Copine-E (cpnE).